The following is a 78-amino-acid chain: Structural DNA-binding protein p10 (78 aa).

The span at 1 to 24 (MPTKAGTKSTANKKTTKGSSKSGS) shows a compositional bias: low complexity. Residues 1–41 (MPTKAGTKSTANKKTTKGSSKSGSPRGHTGKTHAPPSMHSG) are disordered.

Belongs to the asfivirus P10 family.

The protein localises to the virion. In terms of biological role, may play a role in genome packaging through direct interaction with viral DNA. Binds to ssDNA and dsDNA with the same apparent affinity in vitro. This African swine fever virus (isolate Tick/South Africa/Pretoriuskop Pr4/1996) (ASFV) protein is Structural DNA-binding protein p10.